We begin with the raw amino-acid sequence, 257 residues long: Short chain dehydrogenase ausX (257 aa).

Residues isoleucine 11, aspartate 57, arginine 119, tyrosine 151, lysine 155, and valine 184 each contribute to the NADP(+) site. Tyrosine 151 (proton acceptor) is an active-site residue. Lysine 155 functions as the Lowers pKa of active site Tyr in the catalytic mechanism.

The protein belongs to the short-chain dehydrogenases/reductases (SDR) family.

The protein operates within secondary metabolite biosynthesis; terpenoid biosynthesis. In terms of biological role, short chain dehydrogenase; part of the gene cluster that mediates the biosynthesis of calidodehydroaustin, a fungal meroterpenoid. The first step of the pathway is the synthesis of 3,5-dimethylorsellinic acid by the polyketide synthase ausA. 3,5-dimethylorsellinic acid is then prenylated by the polyprenyl transferase ausN. Further epoxidation by the FAD-dependent monooxygenase ausM and cyclization by the probable terpene cyclase ausL lead to the formation of protoaustinoid A. Protoaustinoid A is then oxidized to spiro-lactone preaustinoid A3 by the combined action of the FAD-binding monooxygenases ausB and ausC, and the dioxygenase ausE. Acid-catalyzed keto-rearrangement and ring contraction of the tetraketide portion of preaustinoid A3 by ausJ lead to the formation of preaustinoid A4. The aldo-keto reductase ausK, with the help of ausH, is involved in the next step by transforming preaustinoid A4 into isoaustinone which is in turn hydroxylated by the P450 monooxygenase ausI to form austinolide. The cytochrome P450 monooxygenase ausG modifies austinolide to austinol. Austinol is further acetylated to austin by the O-acetyltransferase ausP, which spontaneously changes to dehydroaustin. The cytochrome P450 monooxygenase ausR then converts dehydroaustin is into 7-dehydrodehydroaustin. The hydroxylation catalyzed by ausR permits the O-acetyltransferase ausQ to add an additional acetyl group to the molecule, leading to the formation of acetoxydehydroaustin. The short chain dehydrogenase ausT catalyzes the reduction of the double bond present between carbon atoms 1 and 2 to convert 7-dehydrodehydroaustin into 1,2-dihydro-7-hydroxydehydroaustin. AusQ catalyzes not only an acetylation reaction but also the addition of the PKS ausV diketide product to 1,2-dihydro-7-hydroxydehydroaustin, forming precalidodehydroaustin. Finally, the iron/alpha-ketoglutarate-dependent dioxygenase converts precalidodehydroaustin into calidodehydroaustin. The chain is Short chain dehydrogenase ausX from Aspergillus calidoustus.